Consider the following 574-residue polypeptide: Sulfite reductase [NADPH] hemoprotein beta-component (574 aa).

[4Fe-4S] cluster-binding residues include C439, C445, C484, and C488. Siroheme is bound at residue C488.

It belongs to the nitrite and sulfite reductase 4Fe-4S domain family. Alpha(8)-beta(8). The alpha component is a flavoprotein, the beta component is a hemoprotein. It depends on siroheme as a cofactor. [4Fe-4S] cluster is required as a cofactor.

The catalysed reaction is hydrogen sulfide + 3 NADP(+) + 3 H2O = sulfite + 3 NADPH + 4 H(+). It participates in sulfur metabolism; hydrogen sulfide biosynthesis; hydrogen sulfide from sulfite (NADPH route): step 1/1. Functionally, component of the sulfite reductase complex that catalyzes the 6-electron reduction of sulfite to sulfide. This is one of several activities required for the biosynthesis of L-cysteine from sulfate. The protein is Sulfite reductase [NADPH] hemoprotein beta-component of Paenibacillus sp. (strain JDR-2).